We begin with the raw amino-acid sequence, 173 residues long: uncharacterized protein (173 aa).

2 disordered regions span residues 1–23 (MGDLPWAPPEAQAPSTAGAGDVA) and 48–173 (TGAA…APQR). A compositionally biased stretch (low complexity) spans 49-60 (GAAPGSAQAGPP). The span at 70 to 83 (PRGPQAPPRLPPSL) shows a compositional bias: pro residues. A compositionally biased stretch (low complexity) spans 123–136 (PACAGSSAPGSPAA).

This is an uncharacterized protein from Homo sapiens (Human).